A 128-amino-acid chain; its full sequence is Holo-[acyl-carrier-protein] synthase (128 aa).

Positions 7 and 55 each coordinate Mg(2+).

This sequence belongs to the P-Pant transferase superfamily. AcpS family. It depends on Mg(2+) as a cofactor.

The protein localises to the cytoplasm. The catalysed reaction is apo-[ACP] + CoA = holo-[ACP] + adenosine 3',5'-bisphosphate + H(+). In terms of biological role, transfers the 4'-phosphopantetheine moiety from coenzyme A to a Ser of acyl-carrier-protein. The chain is Holo-[acyl-carrier-protein] synthase from Moorella thermoacetica (strain ATCC 39073 / JCM 9320).